Reading from the N-terminus, the 753-residue chain is Lysyl oxidase homolog 3 (753 aa).

The first 25 residues, 1–25 (MRPVSVWQWSPWGLLLCLLCSSCLG), serve as a signal peptide directing secretion. SRCR domains lie at 44–145 (FRLA…VICK) and 169–282 (VRIR…VSCV). Disulfide bonds link cysteine 70–cysteine 134, cysteine 83–cysteine 144, cysteine 114–cysteine 124, cysteine 201–cysteine 271, cysteine 214–cysteine 281, and cysteine 248–cysteine 258. Asparagine 111 carries N-linked (GlcNAc...) asparagine glycosylation. N-linked (GlcNAc...) asparagine glycosylation occurs at asparagine 266. Residues 290-302 (SSGQKKQQQSKPQ) show a composition bias toward low complexity. The disordered stretch occupies residues 290–315 (SSGQKKQQQSKPQGEARVRLKGGAHP). 2 SRCR domains span residues 307 to 407 (VRLK…VRCN) and 417 to 525 (IRLS…VICS). 11 disulfide bridges follow: cysteine 332–cysteine 396, cysteine 345–cysteine 406, cysteine 376–cysteine 386, cysteine 446–cysteine 511, cysteine 459–cysteine 524, cysteine 492–cysteine 502, cysteine 554–cysteine 560, cysteine 606–cysteine 654, cysteine 638–cysteine 644, cysteine 666–cysteine 676, and cysteine 713–cysteine 727. N-linked (GlcNAc...) asparagine glycosylation is found at asparagine 390 and asparagine 481. The tract at residues 529–732 (SDLLLHSALV…WVHNCHIGDA (204 aa)) is lysyl-oxidase like. Cu cation contacts are provided by histidine 607, histidine 609, and histidine 611. N-linked (GlcNAc...) asparagine glycosylation occurs at asparagine 625. The lysine tyrosylquinone (Lys-Tyr) cross-link spans 634-670 (KASFCLEDTECQEDVSKRYECANFGEQGITVGCWDLY). 2',4',5'-topaquinone is present on tyrosine 670.

Belongs to the lysyl oxidase family. In terms of assembly, interacts with STAT3. Cu cation is required as a cofactor. Requires lysine tyrosylquinone residue as cofactor. The lysine tyrosylquinone cross-link (LTQ) is generated by condensation of the epsilon-amino group of a lysine with a topaquinone produced by oxidation of tyrosine. In terms of tissue distribution, isoform 1: Predominantly detected in the heart, placenta, lung, and small intestine. Isoform 2: Highly detected in the kidney, pancreas, spleen, and thymus, and is absent in lung. In eye, present in all layers of corneas as well as in the limbus and conjunctiva (at protein level).

Its subcellular location is the secreted. The protein resides in the extracellular space. It is found in the cytoplasm. The protein localises to the nucleus. It carries out the reaction L-lysyl-[protein] + O2 + H2O = (S)-2-amino-6-oxohexanoyl-[protein] + H2O2 + NH4(+). The catalysed reaction is N(6)-acetyl-L-lysyl-[protein] + O2 + H2O = acetamide + (S)-2-amino-6-oxohexanoyl-[protein] + H2O2. Functionally, protein-lysine 6-oxidase that mediates the oxidation of peptidyl lysine residues to allysine in target proteins. Catalyzes the post-translational oxidative deamination of peptidyl lysine residues in precursors of elastin and different types of collagens, a prerequisite in the formation of cross-links between collagens and elastin. Required for somite boundary formation by catalyzing oxidation of fibronectin (FN1), enhancing integrin signaling in myofibers and their adhesion to the myotendinous junction (MTJ). Acts as a regulator of inflammatory response by inhibiting differentiation of naive CD4(+) T-cells into T-helper Th17 or regulatory T-cells (Treg): acts by interacting with STAT3 in the nucleus and catalyzing both deacetylation and oxidation of lysine residues on STAT3, leading to disrupt STAT3 dimerization and inhibit STAT3 transcription activity. Oxidation of lysine residues to allysine on STAT3 preferentially takes place on lysine residues that are acetylated. Also able to catalyze deacetylation of lysine residues on STAT3. Its function is as follows. Shows protein-lysine 6-oxidase activity toward elastin and different types of collagens, with the highest activity toward collagen type VIII. Shows protein-lysine 6-oxidase activity toward elastin and different types of collagens, with the highest activity toward collagen type IV. This chain is Lysyl oxidase homolog 3, found in Homo sapiens (Human).